Consider the following 107-residue polypeptide: U1-lycotoxin-Ls1n (107 aa).

An N-terminal signal peptide occupies residues 1–20; sequence MMKVLVVVALLVTLISYSSS. Positions 21-41 are excised as a propeptide; it reads EGIDDLEADELLSLMANEQTR. Intrachain disulfides connect Cys-44–Cys-59, Cys-51–Cys-68, Cys-58–Cys-86, and Cys-70–Cys-84.

This sequence belongs to the neurotoxin 19 (CSTX) family. 04 (U1-Lctx) subfamily. As to expression, expressed by the venom gland.

The protein resides in the secreted. This is U1-lycotoxin-Ls1n from Lycosa singoriensis (Wolf spider).